The following is a 308-amino-acid chain: Aspartate carbamoyltransferase catalytic subunit (308 aa).

Carbamoyl phosphate-binding residues include R55 and T56. Position 83 (K83) interacts with L-aspartate. Carbamoyl phosphate contacts are provided by R105, H133, and Q136. L-aspartate-binding residues include R166 and R223. Residues G264 and P265 each contribute to the carbamoyl phosphate site.

This sequence belongs to the aspartate/ornithine carbamoyltransferase superfamily. ATCase family. As to quaternary structure, heterododecamer (2C3:3R2) of six catalytic PyrB chains organized as two trimers (C3), and six regulatory PyrI chains organized as three dimers (R2).

The catalysed reaction is carbamoyl phosphate + L-aspartate = N-carbamoyl-L-aspartate + phosphate + H(+). Its pathway is pyrimidine metabolism; UMP biosynthesis via de novo pathway; (S)-dihydroorotate from bicarbonate: step 2/3. Catalyzes the condensation of carbamoyl phosphate and aspartate to form carbamoyl aspartate and inorganic phosphate, the committed step in the de novo pyrimidine nucleotide biosynthesis pathway. This chain is Aspartate carbamoyltransferase catalytic subunit, found in Salinispora arenicola (strain CNS-205).